The primary structure comprises 325 residues: ATP synthase gamma chain (325 aa).

Belongs to the ATPase gamma chain family. As to quaternary structure, F-type ATPases have 2 components, CF(1) - the catalytic core - and CF(0) - the membrane proton channel. CF(1) has five subunits: alpha(3), beta(3), gamma(1), delta(1), epsilon(1). CF(0) has three main subunits: a, b and c.

It is found in the cell membrane. Functionally, produces ATP from ADP in the presence of a proton gradient across the membrane. The gamma chain is believed to be important in regulating ATPase activity and the flow of protons through the CF(0) complex. This is ATP synthase gamma chain from Corynebacterium glutamicum (strain ATCC 13032 / DSM 20300 / JCM 1318 / BCRC 11384 / CCUG 27702 / LMG 3730 / NBRC 12168 / NCIMB 10025 / NRRL B-2784 / 534).